We begin with the raw amino-acid sequence, 275 residues long: Elongation factor Ts (275 aa).

Positions 76–79 (TDFV) are involved in Mg(2+) ion dislocation from EF-Tu.

The protein belongs to the EF-Ts family.

It localises to the cytoplasm. Its function is as follows. Associates with the EF-Tu.GDP complex and induces the exchange of GDP to GTP. It remains bound to the aminoacyl-tRNA.EF-Tu.GTP complex up to the GTP hydrolysis stage on the ribosome. This chain is Elongation factor Ts, found in Mycolicibacterium paratuberculosis (strain ATCC BAA-968 / K-10) (Mycobacterium paratuberculosis).